Here is a 2161-residue protein sequence, read N- to C-terminus: SH3 and multiple ankyrin repeat domains protein 1 (2161 aa).

Residues 1-53 (MTHSPATSEDEERHSASECPEGGSESDSSPDGPGRGPRGTRGQGSGAPGSLAS) form a disordered region. The span at 17–32 (SECPEGGSESDSSPDG) shows a compositional bias: low complexity. Positions 33–47 (PGRGPRGTRGQGSGA) are enriched in gly residues. Y186 is modified (phosphotyrosine). 6 ANK repeats span residues 212-245 (SGET…FRAR), 246-278 (DGMT…YKDR), 279-312 (RGLT…IADE), 313-345 (NGWQ…AQNA), 346-378 (SGNT…VKNN), and 379-395 (NGQT…NFEL). 2 disordered regions span residues 412–433 (ESPK…VPPA) and 455–546 (GAAS…SRGR). A compositionally biased stretch (low complexity) spans 455–479 (GAASSGAPGPTSGSQGQSQPSAPTT). Over residues 527-542 (PAGGTGGSGGPGGSLG) the composition is skewed to gly residues. Residue S540 is modified to Phosphoserine. R544 is modified (omega-N-methylarginine). Residues 554–613 (VPGRSFMAVKSYQAQAEGEISLSKGEKIKVLSIGEGGFWEGQVKGRVGWFPSDCLEEVAN) enclose the SH3 domain. In terms of domain architecture, PDZ spans 663-757 (TVLLQKKDSE…TLMVKVVMVT (95 aa)). Residues S671 and S791 each carry the phosphoserine modification. The disordered stretch occupies residues 832–886 (TISASESPGPGGLASLGKHRPKGFFATESSFDPHHRAQPSYERPSFLPPGPGLML). S890 carries the phosphoserine modification. Disordered stretches follow at residues 909–1229 (SRSL…LDFT), 1241–1289 (RREG…KSID), 1353–1720 (LGLA…GVAS), 1734–1785 (GQAF…PTSP), 1827–1860 (LPTA…QPQA), 1892–1983 (PWAR…TRHL), and 1996–2023 (RRAP…LPIL). Residues 920 to 939 (IPPPPTTSPPEPPYSTPPVP) show a composition bias toward pro residues. Omega-N-methylarginine is present on R950. The span at 996 to 1020 (AHHHPPHHHHHHAPPPQPHHHHAHP) shows a compositional bias: basic residues. Omega-N-methylarginine is present on residues R1051, R1090, and R1101. Residues 1127–1144 (PPAPSPTSPASPQPPPAV) show a composition bias toward pro residues. The span at 1164–1181 (STSSSGRSSQGSSTEAEP) shows a compositional bias: low complexity. The span at 1199 to 1220 (SPAPAMSPVPPSPSPVPTPASP) shows a compositional bias: pro residues. Residues 1241–1252 (RREGGWQNEARR) show a composition bias toward basic and acidic residues. R1253 bears the Asymmetric dimethylarginine mark. Position 1287 is a phosphoserine (S1287). The segment covering 1359-1368 (ARERALKESS) has biased composition (basic and acidic residues). Pro residues predominate over residues 1374 to 1391 (PQPPPRPPSPRYEAPPPT). R1423 is modified (omega-N-methylarginine). S1436 bears the Phosphoserine mark. 2 stretches are compositionally biased toward pro residues: residues 1517–1532 (GVPP…PSPT) and 1583–1609 (PLTP…PPPA). Over residues 1618–1636 (DSTASSLTSYDSEVATLTQ) the composition is skewed to polar residues. Residues 1644–1670 (DPHPPGPPAPAAPAPAAPQPGPDPPPG) show a composition bias toward pro residues. A compositionally biased stretch (basic and acidic residues) spans 1678 to 1688 (VDSRSSSDHPL). Over residues 1692 to 1702 (SSASTLSSLSA) the composition is skewed to low complexity. Composition is skewed to gly residues over residues 1703-1718 (EGGG…GAGV) and 1764-1774 (ASGGLRPGPSG). The segment covering 1775-1785 (GLRDPVTPTSP) has biased composition (low complexity). Pro residues predominate over residues 1844–1855 (PGPPPPPLPGPL). Position 1895 is an omega-N-methylarginine (R1895). Composition is skewed to low complexity over residues 1917–1940 (SSLQ…VSSL), 1954–1980 (TGTG…STST), and 1996–2006 (RRAPSPSLLPA). 3 positions are modified to omega-N-methylarginine: R2016, R2036, and R2074. Positions 2098 to 2161 (WTKFDVADWL…DRALKFFLER (64 aa)) constitute an SAM domain.

This sequence belongs to the SHANK family. As to quaternary structure, may homomultimerize via its SAM domain. Interacts with the C-terminus of SSTR2 via the PDZ domain. Interacts with IGSF9, SHARPIN, SPTAN1, HOMER1 and DLGAP1/GKAP isoforms 1 and 2. Part of a complex with DLG4/PSD-95 and DLGAP1/GKAP. Interacts with BAIAP2. Interacts with HOMER1 and HOMER3. In terms of tissue distribution, expressed in brain particularly in the amygdala, hippocampus, substantia nigra and thalamus. Isoform 2 seems to be expressed ubiquitously.

The protein localises to the cytoplasm. Its subcellular location is the postsynaptic density. The protein resides in the synapse. Seems to be an adapter protein in the postsynaptic density (PSD) of excitatory synapses that interconnects receptors of the postsynaptic membrane including NMDA-type and metabotropic glutamate receptors via complexes with GKAP/PSD-95 and Homer, respectively, and the actin-based cytoskeleton. Plays a role in the structural and functional organization of the dendritic spine and synaptic junction. The protein is SH3 and multiple ankyrin repeat domains protein 1 (SHANK1) of Homo sapiens (Human).